A 201-amino-acid chain; its full sequence is Small ribosomal subunit protein uS4 (201 aa).

The 61-residue stretch at 91 to 151 (SRLDNVVYRA…DKSINTLPFE (61 aa)) folds into the S4 RNA-binding domain.

The protein belongs to the universal ribosomal protein uS4 family. In terms of assembly, part of the 30S ribosomal subunit. Contacts protein S5. The interaction surface between S4 and S5 is involved in control of translational fidelity.

In terms of biological role, one of the primary rRNA binding proteins, it binds directly to 16S rRNA where it nucleates assembly of the body of the 30S subunit. Functionally, with S5 and S12 plays an important role in translational accuracy. This is Small ribosomal subunit protein uS4 from Mycolicibacterium gilvum (strain PYR-GCK) (Mycobacterium gilvum (strain PYR-GCK)).